A 935-amino-acid polypeptide reads, in one-letter code: Protocadherin gamma-A11 (935 aa).

A signal peptide spans 1-29 (MANRLQRGDRSRLLLLLCIFLGTLRGFRA). Cadherin domains follow at residues 30-134 (RQIR…APSF), 135-243 (QEDE…IPMF), 244-348 (TQSV…APEI), 349-453 (TITS…PPVF), 454-563 (PHSS…APEI), and 571-677 (DGST…ADLG). The Extracellular segment spans residues 30–693 (RQIRYSVPEE…NSETSDLSLY (664 aa)). The N-linked (GlcNAc...) asparagine glycan is linked to asparagine 48. Residues asparagine 255, asparagine 266, asparagine 420, and asparagine 546 are each glycosylated (N-linked (GlcNAc...) asparagine). The helical transmembrane segment at 694–714 (LVVAVAAVSCIFLVFVIVLLA) threads the bilayer. Residues 715 to 935 (LRLWRWHKSR…KKKSGKKEKK (221 aa)) are Cytoplasmic-facing. Disordered stretches follow at residues 805–844 (CDPTSNQQAPPNTDWRFSQAQRPGTSGSQNGDDTGTWPNN) and 905–935 (ATLTNAAGKRDGKAPAGGNGNKKKSGKKEKK). A compositionally biased stretch (polar residues) spans 807–844 (PTSNQQAPPNTDWRFSQAQRPGTSGSQNGDDTGTWPNN). A compositionally biased stretch (basic residues) spans 925–935 (NKKKSGKKEKK).

It localises to the cell membrane. Functionally, potential calcium-dependent cell-adhesion protein. May be involved in the establishment and maintenance of specific neuronal connections in the brain. This is Protocadherin gamma-A11 (PCDHGA11) from Homo sapiens (Human).